A 168-amino-acid polypeptide reads, in one-letter code: MAILNILEFPDPRLRTIAKPVDVVDDGIRQLVDDMFETMYEAPGIGLAATQVNVHKRVVVMDLSEDRSEPRVFINPEFEPLTDQMDQYQEGCLSVPGFYENVDRPQKVRIKALDRDGKPYELIAEGLLAVCIQHECDHLNGKLFVDYLSSLKRDRIKKKLEKIHRQQA.

The Fe cation site is built by C92 and H134. The active site involves E135. H138 provides a ligand contact to Fe cation.

The protein belongs to the polypeptide deformylase family. It depends on Fe(2+) as a cofactor.

It catalyses the reaction N-terminal N-formyl-L-methionyl-[peptide] + H2O = N-terminal L-methionyl-[peptide] + formate. Functionally, removes the formyl group from the N-terminal Met of newly synthesized proteins. Requires at least a dipeptide for an efficient rate of reaction. N-terminal L-methionine is a prerequisite for activity but the enzyme has broad specificity at other positions. The sequence is that of Peptide deformylase from Stutzerimonas stutzeri (strain A1501) (Pseudomonas stutzeri).